The sequence spans 574 residues: DNA mismatch repair protein MutL (574 aa).

The protein belongs to the DNA mismatch repair MutL/HexB family.

This protein is involved in the repair of mismatches in DNA. It is required for dam-dependent methyl-directed DNA mismatch repair. May act as a 'molecular matchmaker', a protein that promotes the formation of a stable complex between two or more DNA-binding proteins in an ATP-dependent manner without itself being part of a final effector complex. In Coxiella burnetii (strain Dugway 5J108-111), this protein is DNA mismatch repair protein MutL.